A 172-amino-acid polypeptide reads, in one-letter code: Endoribonuclease YbeY (172 aa).

Zn(2+) contacts are provided by H136, H140, and H146.

The protein belongs to the endoribonuclease YbeY family. The cofactor is Zn(2+).

Its subcellular location is the cytoplasm. Its function is as follows. Single strand-specific metallo-endoribonuclease involved in late-stage 70S ribosome quality control and in maturation of the 3' terminus of the 16S rRNA. The protein is Endoribonuclease YbeY of Rickettsia canadensis (strain McKiel).